The following is a 35-amino-acid chain: Photosystem II reaction center protein Psb30 (35 aa).

The chain crosses the membrane as a helical span at residues 7–27; it reads VFVQLALLALIVLAGPAVILL.

Belongs to the Psb30/Ycf12 family. As to quaternary structure, PSII is composed of 1 copy each of membrane proteins PsbA, PsbB, PsbC, PsbD, PsbE, PsbF, PsbH, PsbI, PsbJ, PsbK, PsbL, PsbM, PsbT, PsbX, PsbY, PsbZ, Psb30/Ycf12, peripheral proteins PsbO, CyanoQ (PsbQ), PsbU, PsbV and a large number of cofactors. It forms dimeric complexes.

Its subcellular location is the cellular thylakoid membrane. In terms of biological role, a core subunit of photosystem II (PSII), probably helps stabilize the reaction center. The protein is Photosystem II reaction center protein Psb30 of Synechococcus sp. (strain JA-2-3B'a(2-13)) (Cyanobacteria bacterium Yellowstone B-Prime).